The sequence spans 277 residues: MQHERPTHGMNIPALRRRKQVLDLAEETVAIEVPGLSLFYGDKQALFDIALNIPKQKVTSFIGPSGCGKSTLLRSFNRMNDLVDGCRVEGAINLYGHNIYTKGEEVAELRRRVGMVFQKPNPFPKTIYENVVYGLRIQGINKKRVLDEAVAWALKAAALWDEVKDRLHESALGLSGGQQQRLVIARTIAVEPEVLLLDEPCSALDPISTLKVEELIYELKSKYTIVIVTHNMQQAARVSDYTAFMYMGKLVEFGDTDTLFTNPAKKQTEDYITGRYG.

The ABC transporter domain maps to 31–272 (IEVPGLSLFY…PAKKQTEDYI (242 aa)). 63-70 (GPSGCGKS) is an ATP binding site.

The protein belongs to the ABC transporter superfamily. Phosphate importer (TC 3.A.1.7) family. As to quaternary structure, the complex is composed of two ATP-binding proteins (PstB), two transmembrane proteins (PstC and PstA) and a solute-binding protein (PstS).

The protein resides in the cell inner membrane. It carries out the reaction phosphate(out) + ATP + H2O = ADP + 2 phosphate(in) + H(+). Its function is as follows. Part of the ABC transporter complex PstSACB involved in phosphate import. Responsible for energy coupling to the transport system. The polypeptide is Phosphate import ATP-binding protein PstB 2 (Pseudomonas syringae pv. tomato (strain ATCC BAA-871 / DC3000)).